The following is a 313-amino-acid chain: Cytochrome f (313 aa).

The signal sequence occupies residues 1–30 (MRNWSFSKAALTVSLLALSWSPFGPAEVQA). 4 residues coordinate heme: Tyr-31, Cys-51, Cys-54, and His-55. A helical membrane pass occupies residues 279-298 (VQGLIIFFAFVLIAQVFLVL).

It belongs to the cytochrome f family. The 4 large subunits of the cytochrome b6-f complex are cytochrome b6, subunit IV (17 kDa polypeptide, petD), cytochrome f and the Rieske protein, while the 4 small subunits are PetG, PetL, PetM and PetN. The complex functions as a dimer. The cofactor is heme.

The protein resides in the plastid. The protein localises to the chloroplast thylakoid membrane. Functionally, component of the cytochrome b6-f complex, which mediates electron transfer between photosystem II (PSII) and photosystem I (PSI), cyclic electron flow around PSI, and state transitions. The chain is Cytochrome f from Nephroselmis olivacea (Green alga).